Reading from the N-terminus, the 277-residue chain is Movement protein (277 aa).

This sequence belongs to the cucumovirus movement protein family.

It localises to the host cell junction. The protein resides in the host plasmodesma. In terms of biological role, transports viral genome to neighboring plant cells directly through plasmosdesmata, without any budding. The movement protein allows efficient cell to cell propagation, by bypassing the host cell wall barrier. Acts by forming a tubular structure at the host plasmodesmata, enlarging it enough to allow free passage of virion capsids. This Canna (Florist's daisy) protein is Movement protein.